The primary structure comprises 500 residues: Probable cytosol aminopeptidase (500 aa).

Residues lysine 265 and aspartate 270 each contribute to the Mn(2+) site. Lysine 277 is a catalytic residue. Residues aspartate 288, aspartate 347, and glutamate 349 each contribute to the Mn(2+) site. Arginine 351 is a catalytic residue.

It belongs to the peptidase M17 family. Mn(2+) is required as a cofactor.

The protein localises to the cytoplasm. It carries out the reaction Release of an N-terminal amino acid, Xaa-|-Yaa-, in which Xaa is preferably Leu, but may be other amino acids including Pro although not Arg or Lys, and Yaa may be Pro. Amino acid amides and methyl esters are also readily hydrolyzed, but rates on arylamides are exceedingly low.. The catalysed reaction is Release of an N-terminal amino acid, preferentially leucine, but not glutamic or aspartic acids.. Presumably involved in the processing and regular turnover of intracellular proteins. Catalyzes the removal of unsubstituted N-terminal amino acids from various peptides. The protein is Probable cytosol aminopeptidase of Rickettsia massiliae (strain Mtu5).